Reading from the N-terminus, the 274-residue chain is Penicillin-insensitive murein endopeptidase (274 aa).

Residues 1-19 form the signal peptide; it reads MKKTAIALLAWFVSSASLA. Cystine bridges form between Cys-44-Cys-265, Cys-187-Cys-235, and Cys-216-Cys-223. Zn(2+)-binding residues include His-110, His-113, Asp-120, Asp-147, His-150, and His-211. Residues 225–274 form a disordered region; it reads DQPLPPPGDGCGAELQSWFEPPKPGTTKPEKKTPPPLPPSCQALLDEHVL.

Belongs to the peptidase M74 family. Dimer. Zn(2+) serves as cofactor.

It is found in the periplasm. In terms of biological role, murein endopeptidase that cleaves the D-alanyl-meso-2,6-diamino-pimelyl amide bond that connects peptidoglycan strands. Likely plays a role in the removal of murein from the sacculus. In Salmonella heidelberg (strain SL476), this protein is Penicillin-insensitive murein endopeptidase.